A 182-amino-acid chain; its full sequence is Adenine phosphoribosyltransferase (182 aa).

Belongs to the purine/pyrimidine phosphoribosyltransferase family. As to quaternary structure, homodimer.

Its subcellular location is the cytoplasm. The enzyme catalyses AMP + diphosphate = 5-phospho-alpha-D-ribose 1-diphosphate + adenine. The protein operates within purine metabolism; AMP biosynthesis via salvage pathway; AMP from adenine: step 1/1. Functionally, catalyzes a salvage reaction resulting in the formation of AMP, that is energically less costly than de novo synthesis. In Sulfurimonas denitrificans (strain ATCC 33889 / DSM 1251) (Thiomicrospira denitrificans (strain ATCC 33889 / DSM 1251)), this protein is Adenine phosphoribosyltransferase.